The primary structure comprises 391 residues: Ribosomal RNA small subunit methyltransferase H (391 aa).

A disordered region spans residues 1–23; that stretch reads MDVDVQDDVQGRAGEGAEERAHD. Residues 59–61, aspartate 78, leucine 112, aspartate 126, and glutamine 133 each bind S-adenosyl-L-methionine; that span reads GGH. Residues 284–391 are disordered; sequence SSSSAPPDLP…EPGATVERTP (108 aa). The segment covering 368–380 has biased composition (basic and acidic residues); it reads RTQEFETHPHLEP.

Belongs to the methyltransferase superfamily. RsmH family.

It is found in the cytoplasm. It catalyses the reaction cytidine(1402) in 16S rRNA + S-adenosyl-L-methionine = N(4)-methylcytidine(1402) in 16S rRNA + S-adenosyl-L-homocysteine + H(+). Specifically methylates the N4 position of cytidine in position 1402 (C1402) of 16S rRNA. The sequence is that of Ribosomal RNA small subunit methyltransferase H from Kineococcus radiotolerans (strain ATCC BAA-149 / DSM 14245 / SRS30216).